The sequence spans 613 residues: Secretogranin-2 (613 aa).

An N-terminal signal peptide occupies residues 1–27; that stretch reads MAEAKTHWLGAVLSLIPLIFLLSEAEA. The propeptide occupies 28 to 30; that stretch reads ASF. Disordered regions lie at residues 67 to 105 and 119 to 146; these read QQAH…DSLS and QAEN…PMDM. The span at 92–105 shows a compositional bias: basic and acidic residues; that stretch reads ENGDLPESSRDSLS. Tyrosine 150 is subject to Sulfotyrosine. Serine 173, serine 267, serine 428, serine 528, serine 551, and serine 552 each carry phosphoserine. Over residues 257 to 283 the composition is skewed to basic and acidic residues; sequence ESQTQEEVRDSKENADKTEQINDEMKR. Positions 257–287 are disordered; the sequence is ESQTQEEVRDSKENADKTEQINDEMKRSGQL. The segment covering 546–557 has biased composition (basic and acidic residues); that stretch reads HLSQHSSQETDK. A disordered region spans residues 546 to 580; the sequence is HLSQHSSQETDKLASVSKRLPVGTPKSDDTPNRPY.

The protein belongs to the chromogranin/secretogranin protein family. In terms of assembly, interacts with Secretogranin III/SCG3. As to expression, highest levels detected in anterior pituitary followed by adrenal medulla and posterior pituitary (at protein level). In the brain, high levels are found in the hypothalamus, comparable to those present in posterior pituitary with two- to six-fold lower levels present in the other brain regions investigated including caudate nucleus, hippocampus, thalamus and brainstem (at protein level).

It is found in the secreted. Neuroendocrine protein of the granin family that regulates the biogenesis of secretory granules. The chain is Secretogranin-2 (SCG2) from Bos taurus (Bovine).